We begin with the raw amino-acid sequence, 247 residues long: MSKLFWAMLAFISRLPVPSRWSQGLDFEQYSRGIVMFPFIGLILGGVSGLIFILLQPWCGIPLAALFCILALALLTGGFHLDGLADTCDGIFSARRRERMLEIMRDSRLGTHGGLALIFVLLAKILVVSELALRGTPMLAALAAACAAGRGSAVLLMYRHRYAREEGLGNVFIGKVSGRQTCITLGLAIIIATVLLPGMQGLAAMVVTCAAIFILGQLLKRTLGGQTGDTLGAAIELGELIFLLALL.

A run of 6 helical transmembrane segments spans residues 34–54 (IVMF…IFIL), 59–79 (CGIP…TGGF), 113–133 (GGLA…ELAL), 138–158 (MLAA…LLMY), 171–193 (VFIG…IIAT), and 197–219 (PGMQ…GQLL).

This sequence belongs to the CobS family. The cofactor is Mg(2+).

It localises to the cell inner membrane. It catalyses the reaction alpha-ribazole + adenosylcob(III)inamide-GDP = adenosylcob(III)alamin + GMP + H(+). It carries out the reaction alpha-ribazole 5'-phosphate + adenosylcob(III)inamide-GDP = adenosylcob(III)alamin 5'-phosphate + GMP + H(+). The protein operates within cofactor biosynthesis; adenosylcobalamin biosynthesis; adenosylcobalamin from cob(II)yrinate a,c-diamide: step 7/7. In terms of biological role, joins adenosylcobinamide-GDP and alpha-ribazole to generate adenosylcobalamin (Ado-cobalamin). Also synthesizes adenosylcobalamin 5'-phosphate from adenosylcobinamide-GDP and alpha-ribazole 5'-phosphate. This Salmonella newport (strain SL254) protein is Adenosylcobinamide-GDP ribazoletransferase.